Here is a 236-residue protein sequence, read N- to C-terminus: F-box and leucine-rich protein 22 (236 aa).

Positions methionine 1–leucine 46 constitute an F-box domain. LRR repeat units follow at residues phenylalanine 15 to proline 40, tryptophan 43 to tryptophan 72, histidine 98 to glycine 123, cysteine 124 to asparagine 149, cysteine 150 to phenylalanine 175, and cysteine 176 to serine 201.

Directly interacts with SKP1 and CUL1. In terms of tissue distribution, enriched in cardiac muscle (at protein level).

It is found in the cytoplasm. Its subcellular location is the myofibril. It localises to the sarcomere. The protein resides in the z line. It functions in the pathway protein modification; protein ubiquitination. In terms of biological role, substrate-recognition component of the SCF (SKP1-CUL1-F-box protein)-type E3 ubiquitin ligase complex. Promotes ubiquitination of sarcomeric proteins alpha-actinin-2 (ACTN2) and filamin-C (FLNC). The polypeptide is F-box and leucine-rich protein 22 (Fbxl22) (Mus musculus (Mouse)).